Reading from the N-terminus, the 195-residue chain is UPF0215 protein TGAM_0348 (195 aa).

Belongs to the UPF0215 family.

The sequence is that of UPF0215 protein TGAM_0348 from Thermococcus gammatolerans (strain DSM 15229 / JCM 11827 / EJ3).